The chain runs to 860 residues: Leucine--tRNA ligase (860 aa).

The 'HIGH' region signature appears at 42-52; the sequence is PYPSGRLHMGH. The 'KMSKS' region signature appears at 619 to 623; that stretch reads KMSKS. Lys-622 serves as a coordination point for ATP.

Belongs to the class-I aminoacyl-tRNA synthetase family.

It localises to the cytoplasm. It carries out the reaction tRNA(Leu) + L-leucine + ATP = L-leucyl-tRNA(Leu) + AMP + diphosphate. The sequence is that of Leucine--tRNA ligase from Salmonella paratyphi A (strain ATCC 9150 / SARB42).